The chain runs to 439 residues: CBL-interacting protein kinase 14 (439 aa).

Residues tyrosine 12 to phenylalanine 267 form the Protein kinase domain. ATP contacts are provided by residues leucine 18–valine 26 and lysine 41. Aspartate 135 functions as the Proton acceptor in the catalytic mechanism. An activation loop region spans residues aspartate 153–glutamate 182. The NAF domain maps to arginine 298–isoleucine 333. A PPI region spans residues arginine 338–valine 367.

It belongs to the protein kinase superfamily. CAMK Ser/Thr protein kinase family. SNF1 subfamily. Requires Mn(2+) as cofactor.

The enzyme catalyses L-seryl-[protein] + ATP = O-phospho-L-seryl-[protein] + ADP + H(+). It carries out the reaction L-threonyl-[protein] + ATP = O-phospho-L-threonyl-[protein] + ADP + H(+). CIPK serine-threonine protein kinases interact with CBL proteins. Binding of a CBL protein to the regulatory NAF domain of CIPK protein lead to the activation of the kinase in a calcium-dependent manner. The sequence is that of CBL-interacting protein kinase 14 (CIPK14) from Oryza sativa subsp. japonica (Rice).